Reading from the N-terminus, the 378-residue chain is tRNA-specific 2-thiouridylase MnmA (378 aa).

ATP-binding positions include 14–21 and leucine 40; that span reads AMSGGVDS. The Nucleophile role is filled by cysteine 109. A disulfide bridge connects residues cysteine 109 and cysteine 208. Glycine 133 provides a ligand contact to ATP. The segment at 156–158 is interaction with tRNA; sequence KDQ. The Cysteine persulfide intermediate role is filled by cysteine 208.

The protein belongs to the MnmA/TRMU family.

It is found in the cytoplasm. It catalyses the reaction S-sulfanyl-L-cysteinyl-[protein] + uridine(34) in tRNA + AH2 + ATP = 2-thiouridine(34) in tRNA + L-cysteinyl-[protein] + A + AMP + diphosphate + H(+). Catalyzes the 2-thiolation of uridine at the wobble position (U34) of tRNA, leading to the formation of s(2)U34. This is tRNA-specific 2-thiouridylase MnmA from Streptomyces griseus subsp. griseus (strain JCM 4626 / CBS 651.72 / NBRC 13350 / KCC S-0626 / ISP 5235).